A 443-amino-acid chain; its full sequence is UPF0597 protein DVU_0440 (443 aa).

The protein belongs to the UPF0597 family.

The protein is UPF0597 protein DVU_0440 of Nitratidesulfovibrio vulgaris (strain ATCC 29579 / DSM 644 / CCUG 34227 / NCIMB 8303 / VKM B-1760 / Hildenborough) (Desulfovibrio vulgaris).